A 239-amino-acid polypeptide reads, in one-letter code: Phosducin-like protein 2 (239 aa).

Positions 26–87 (TEDELFDLIK…IQQMKVEAEL (62 aa)) form a coiled coil. The Phosducin domain maps to 36–196 (EAAEMATEAE…TTVNDIEWQL (161 aa)). A compositionally biased stretch (basic and acidic residues) spans 42–59 (TEAEKNEKLENASLKDLK). Disordered regions lie at residues 42–64 (TEAE…MEDD) and 212–239 (ITLA…DSDD). The thioredoxin fold stretch occupies residues 90 to 239 (FGELKEISEP…DESDNSDSDD (150 aa)). The span at 214 to 224 (LARKKSQKSRY) shows a compositional bias: basic residues. Positions 230-239 (DESDNSDSDD) are enriched in acidic residues.

It belongs to the phosducin family.

This Dictyostelium discoideum (Social amoeba) protein is Phosducin-like protein 2 (phlp2).